The sequence spans 513 residues: MNKLAGAELSTLLEQRITNYYTKLQVDEIGRVVSVGDGIARVYGLNKIQAGEMVEFASGVKGMALNLENENVGIVIFGSDTAIKEGDIVKRTGSIVDVPVGKGMLGRVVDALGVPIDGKGALSAVERRRVEVKAPGIIARKSVHEPMQTGLKAVDSLVPIGRGQRELIIGDRQTGKTAIAIDTILNQKQINAQGTSDSEKLYCVYVAIGQKRSTVAQLVKILSEAGALEYSIIVAATASDPAPLQFLAPYSGCAMGEYFRDNGMHALIIYDDLSKQSVAYRQMSLLLRRPPGREAFPGDVFYLHSRLLERAAKMSDQTGAGSLTALPVIETQAGDVSAYIPTNVISITDGQIFLETELFYRGSRPAINVGLSVSRVGSAAQLKAMKQVCGSLKLELAQYREVAAFAQFGSDLDAATQYLLNRGARLTEILKQAQYSPIPIEKQIVVIYAAVKGYLDQIPVALITHYEQELLKSIDPGLLSAIVQQKNITEQISSQLATFCQKFTQSFLATHQS.

G170–T177 contacts ATP.

Belongs to the ATPase alpha/beta chains family. As to quaternary structure, F-type ATPases have 2 components, CF(1) - the catalytic core - and CF(0) - the membrane proton channel. CF(1) has five subunits: alpha(3), beta(3), gamma(1), delta(1), epsilon(1). CF(0) has three main subunits: a, b and c.

The protein localises to the mitochondrion. Its subcellular location is the mitochondrion inner membrane. In terms of biological role, mitochondrial membrane ATP synthase (F(1)F(0) ATP synthase or Complex V) produces ATP from ADP in the presence of a proton gradient across the membrane which is generated by electron transport complexes of the respiratory chain. F-type ATPases consist of two structural domains, F(1) - containing the extramembraneous catalytic core, and F(0) - containing the membrane proton channel, linked together by a central stalk and a peripheral stalk. During catalysis, ATP synthesis in the catalytic domain of F(1) is coupled via a rotary mechanism of the central stalk subunits to proton translocation. Subunits alpha and beta form the catalytic core in F(1). Rotation of the central stalk against the surrounding alpha(3)beta(3) subunits leads to hydrolysis of ATP in three separate catalytic sites on the beta subunits. Subunit alpha does not bear the catalytic high-affinity ATP-binding sites. The sequence is that of ATP synthase subunit alpha, mitochondrial (ATPA) from Marchantia polymorpha (Common liverwort).